Consider the following 1917-residue polypeptide: Diacylglycerol kinase eta (1917 aa).

Positions 1-10 (MSHLKLDTLH) are enriched in basic and acidic residues. Positions 1–37 (MSHLKLDTLHVQRSPRGSRRSSRSSGRSSACSSGSIS) are disordered. Positions 23-37 (RSSGRSSACSSGSIS) are enriched in low complexity. Residues 82–175 (AIIKEGFLLK…WLGSLKTATA (94 aa)) form the PH domain. 2 Phorbol-ester/DAG-type zinc fingers span residues 195-245 (HHHW…IANC) and 268-319 (PHQW…AVAC). Residues 350 to 486 (GNFSPLLVFV…DRWSIMVFEK (137 aa)) form the DAGKc domain. Disordered stretches follow at residues 1015-1053 (TTLC…PPRI), 1114-1149 (LEQQ…SEDE), and 1380-1399 (KDKD…EETN). A compositionally biased stretch (polar residues) spans 1128–1145 (PEQQQTPTNKGPNSLATT). The SAM domain occupies 1854-1917 (WSVNEVVTWL…LQAIKDLSEN (64 aa)).

It belongs to the eukaryotic diacylglycerol kinase family.

Its subcellular location is the cytoplasm. It carries out the reaction a 1,2-diacyl-sn-glycerol + ATP = a 1,2-diacyl-sn-glycero-3-phosphate + ADP + H(+). In terms of biological role, phosphorylates diacylglycerol (DAG) to generate phosphatidic acid (PA). The chain is Diacylglycerol kinase eta from Drosophila yakuba (Fruit fly).